The following is a 237-amino-acid chain: Ribonuclease PH (237 aa).

Phosphate contacts are provided by residues Arg86 and 124 to 126 (GTR).

The protein belongs to the RNase PH family. Homohexameric ring arranged as a trimer of dimers.

The enzyme catalyses tRNA(n+1) + phosphate = tRNA(n) + a ribonucleoside 5'-diphosphate. In terms of biological role, phosphorolytic 3'-5' exoribonuclease that plays an important role in tRNA 3'-end maturation. Removes nucleotide residues following the 3'-CCA terminus of tRNAs; can also add nucleotides to the ends of RNA molecules by using nucleoside diphosphates as substrates, but this may not be physiologically important. Probably plays a role in initiation of 16S rRNA degradation (leading to ribosome degradation) during starvation. In Shewanella piezotolerans (strain WP3 / JCM 13877), this protein is Ribonuclease PH.